The primary structure comprises 466 residues: Methylenetetrahydrofolate--tRNA-(uracil-5-)-methyltransferase TrmFO (466 aa).

14–19 (GGGLAG) lines the FAD pocket.

The protein belongs to the MnmG family. TrmFO subfamily. The cofactor is FAD.

It is found in the cytoplasm. The enzyme catalyses uridine(54) in tRNA + (6R)-5,10-methylene-5,6,7,8-tetrahydrofolate + NADH + H(+) = 5-methyluridine(54) in tRNA + (6S)-5,6,7,8-tetrahydrofolate + NAD(+). It carries out the reaction uridine(54) in tRNA + (6R)-5,10-methylene-5,6,7,8-tetrahydrofolate + NADPH + H(+) = 5-methyluridine(54) in tRNA + (6S)-5,6,7,8-tetrahydrofolate + NADP(+). Functionally, catalyzes the folate-dependent formation of 5-methyl-uridine at position 54 (M-5-U54) in all tRNAs. The protein is Methylenetetrahydrofolate--tRNA-(uracil-5-)-methyltransferase TrmFO of Brucella melitensis biotype 1 (strain ATCC 23456 / CCUG 17765 / NCTC 10094 / 16M).